The sequence spans 241 residues: MIITGHLILVRHGEPGLKPGERLSGWIDIPLSRKGIEEALECAKALENIEIDIAFASDLVRTQETLFIILSGQKKTGVVVHEKTEDKVPPEKLDWYSYPEKLGEDLIPVYTTPALNERYYGKLQGRKKQKMEEKYGAEQVANWRWNFEPGPPEGESLKAVYERTVPYFRKKVMPALEGGKNVLICAHQSSLRALVKYIEDISDKDIREVRLSTGELAIYHFSEGKLVRENEELGPELKRNI.

His12 acts as the Tele-phosphohistidine intermediate in catalysis. Substrate contacts are provided by residues 24–25, Arg61, 117–120, and Lys128; these read SG and ERYY. The Proton donor/acceptor role is filled by Glu117.

Belongs to the phosphoglycerate mutase family. BPG-dependent PGAM subfamily.

The enzyme catalyses (2R)-2-phosphoglycerate = (2R)-3-phosphoglycerate. Its pathway is carbohydrate degradation; glycolysis; pyruvate from D-glyceraldehyde 3-phosphate: step 3/5. In terms of biological role, catalyzes the interconversion of 2-phosphoglycerate and 3-phosphoglycerate. This chain is 2,3-bisphosphoglycerate-dependent phosphoglycerate mutase, found in Methanosarcina mazei (strain ATCC BAA-159 / DSM 3647 / Goe1 / Go1 / JCM 11833 / OCM 88) (Methanosarcina frisia).